A 481-amino-acid chain; its full sequence is UDP-glycosyltransferase 85C2 (481 aa).

Histidine 23 serves as the catalytic Proton acceptor. Histidine 23 contributes to the an anthocyanidin binding site. Aspartate 120 (charge relay) is an active-site residue. Residues threonine 143, glutamine 362, histidine 377, tryptophan 380, serine 382, glutamate 385, aspartate 401, and glutamine 402 each coordinate UDP-alpha-D-glucose.

It belongs to the UDP-glycosyltransferase family.

It carries out the reaction steviol + UDP-alpha-D-glucose = steviolmonoside + UDP + H(+). It catalyses the reaction steviolmonoside + UDP-alpha-D-glucose = rubusoside + UDP. In terms of biological role, involved in the biosynthesis of steviol glycosides in leaves. Converts steviol to the mono-glycoside steviolmonoside. Converts the mono-glycoside steviolmonoside to the bi-glycoside rubusoside. In Stevia rebaudiana (Stevia), this protein is UDP-glycosyltransferase 85C2.